Here is a 72-residue protein sequence, read N- to C-terminus: ATP synthase subunit c (72 aa).

Helical transmembrane passes span 5-25 (LLAA…IGIA) and 52-72 (GLSE…LFVV).

It belongs to the ATPase C chain family. F-type ATPases have 2 components, F(1) - the catalytic core - and F(0) - the membrane proton channel. F(1) has five subunits: alpha(3), beta(3), gamma(1), delta(1), epsilon(1). F(0) has three main subunits: a(1), b(2) and c(10-14). The alpha and beta chains form an alternating ring which encloses part of the gamma chain. F(1) is attached to F(0) by a central stalk formed by the gamma and epsilon chains, while a peripheral stalk is formed by the delta and b chains.

It is found in the cell membrane. Functionally, f(1)F(0) ATP synthase produces ATP from ADP in the presence of a proton or sodium gradient. F-type ATPases consist of two structural domains, F(1) containing the extramembraneous catalytic core and F(0) containing the membrane proton channel, linked together by a central stalk and a peripheral stalk. During catalysis, ATP synthesis in the catalytic domain of F(1) is coupled via a rotary mechanism of the central stalk subunits to proton translocation. Key component of the F(0) channel; it plays a direct role in translocation across the membrane. A homomeric c-ring of between 10-14 subunits forms the central stalk rotor element with the F(1) delta and epsilon subunits. The protein is ATP synthase subunit c of Clostridium perfringens (strain SM101 / Type A).